A 188-amino-acid chain; its full sequence is Antitoxin SocA (188 aa).

Interacts with cognate toxin SocB and with ClpX.

Functionally, antitoxin component of an atypical type II toxin-antitoxin (TA) system. Unlike most type II TA systems, neutralizes the toxic activity of cognate toxin SocB by acting as an adapter to promote its degradation by ClpXP; degradation is dependent on the N-terminus of ClpX. The protein is Antitoxin SocA of Caulobacter vibrioides (strain NA1000 / CB15N) (Caulobacter crescentus).